Here is a 431-residue protein sequence, read N- to C-terminus: UDP-N-acetylmuramate--L-alanine ligase (431 aa).

108–114 contacts ATP; that stretch reads GSHGKTS.

It belongs to the MurCDEF family.

Its subcellular location is the cytoplasm. The enzyme catalyses UDP-N-acetyl-alpha-D-muramate + L-alanine + ATP = UDP-N-acetyl-alpha-D-muramoyl-L-alanine + ADP + phosphate + H(+). It functions in the pathway cell wall biogenesis; peptidoglycan biosynthesis. Cell wall formation. The sequence is that of UDP-N-acetylmuramate--L-alanine ligase from Exiguobacterium sibiricum (strain DSM 17290 / CCUG 55495 / CIP 109462 / JCM 13490 / 255-15).